Here is a 157-residue protein sequence, read N- to C-terminus: MNDLTHIDSGGTARMVDVGGKAETHRVAIARGTIRMRGQTLDAIRSGNAPKGDVLGPARIAGIMAAKKTGDLIPLCHPLALDAVNVDFAFVADGIECTATASLTGRTGVEMEALTAVSVALLTIYDMAKALDKGMVIEAIRLVEKRGGKSGTWKAAE.

Residues 75 to 77 and 111 to 112 each bind substrate; these read LCH and ME. Asp-126 is an active-site residue.

This sequence belongs to the MoaC family. Homohexamer; trimer of dimers.

The catalysed reaction is (8S)-3',8-cyclo-7,8-dihydroguanosine 5'-triphosphate = cyclic pyranopterin phosphate + diphosphate. It participates in cofactor biosynthesis; molybdopterin biosynthesis. Catalyzes the conversion of (8S)-3',8-cyclo-7,8-dihydroguanosine 5'-triphosphate to cyclic pyranopterin monophosphate (cPMP). In Novosphingobium aromaticivorans (strain ATCC 700278 / DSM 12444 / CCUG 56034 / CIP 105152 / NBRC 16084 / F199), this protein is Cyclic pyranopterin monophosphate synthase.